The chain runs to 611 residues: Aspartate--tRNA ligase, mitochondrial (611 aa).

Residues 1–30 constitute a mitochondrion transit peptide; it reads MVLSRLPACLLPLVGTKVSIQGWLVATSRQ. Glu-192 contributes to the L-aspartate binding site. The segment at 216-219 is aspartate; sequence QQYK. Arg-238 provides a ligand contact to L-aspartate. ATP-binding positions include 238–240 and Glu-502; that span reads RDE. Arg-509 contributes to the L-aspartate binding site. Position 554 to 557 (554 to 557) interacts with ATP; that stretch reads GFDR.

The protein belongs to the class-II aminoacyl-tRNA synthetase family. Type 1 subfamily.

It is found in the mitochondrion. The enzyme catalyses tRNA(Asp) + L-aspartate + ATP = L-aspartyl-tRNA(Asp) + AMP + diphosphate. The sequence is that of Aspartate--tRNA ligase, mitochondrial (msd1) from Schizosaccharomyces pombe (strain 972 / ATCC 24843) (Fission yeast).